Reading from the N-terminus, the 849-residue chain is Putative respiratory burst oxidase homolog protein G (849 aa).

Basic and acidic residues predominate over residues 1-17; that stretch reads MQRVSFEVKDTEAEKSS. Residues 1–53 are disordered; the sequence is MQRVSFEVKDTEAEKSSSEILSGSLPSTYRNPAMENVGNAVDDGSSVKNNPKL. Residues 1–303 lie on the Cytoplasmic side of the membrane; sequence MQRVSFEVKD…RFFVLDSWQR (303 aa). A compositionally biased stretch (low complexity) spans 18-27; it reads SEILSGSLPS. EF-hand-like regions lie at residues 118–128 and 153–164; these read TANTDGLLLRS and SHLKGDVITETE. EF-hand domains lie at 176–211 and 220–255; these read SFDSRLITFFDLMDKDSDGRLTEDEVREIIKLSSSA and KADEYAAMIMEELDPDHMGYIMMESLKKLLLQAETK. The Ca(2+) site is built by Asp-189, Asp-191, Asp-193, Arg-195, and Glu-200. At Ser-270 the chain carries Phosphoserine. The helical transmembrane segment at 304–324 threads the bilayer; sequence VWVIALWLTIMAILFAYKYIQ. Over 325-392 the chain is Extracellular; the sequence is YKNRAVYEVL…LNFHKVIAVG (68 aa). In terms of domain architecture, Ferric oxidoreductase spans 342 to 502; sequence KGAAETLKLN…LFVIVYILLV (161 aa). Residues 393–409 form a helical membrane-spanning segment; the sequence is IAIGVAIHSVSHLACDF. Over 410–444 the chain is Cytoplasmic; the sequence is PLLIAATPAEYMPLGKFFGEEQPKRYLHFVKSTEG. The helical transmembrane segment at 445–465 threads the bilayer; it reads ITGLVMVFLMVIAFTLAMPWF. Topologically, residues 466–489 are extracellular; the sequence is RRGKLEKKLPGPLKKLASFNAFWY. A helical transmembrane segment spans residues 490–510; that stretch reads THHLFVIVYILLVLHGYYIYL. Over 511 to 518 the chain is Cytoplasmic; it reads NKEWYKKT. A helical membrane pass occupies residues 519-536; the sequence is TWMYLAVPVALYAYERLI. Residues 537–659 lie on the Extracellular side of the membrane; it reads RAFRSSIRTV…PYGAPAQDYK (123 aa). The region spanning 541–657 is the FAD-binding FR-type domain; that stretch reads SSIRTVKVLK…DGPYGAPAQD (117 aa). Residues 660–680 form a helical membrane-spanning segment; it reads KYEVVLLIGLGIGATPMISII. The Cytoplasmic portion of the chain corresponds to 681-849; that stretch reads KDIINNTETK…TRFSFHKENF (169 aa).

Belongs to the RBOH (TC 5.B.1.3) family. As to quaternary structure, monomer and homodimer.

It is found in the membrane. Functionally, calcium-dependent NADPH oxidase that generates superoxide. The polypeptide is Putative respiratory burst oxidase homolog protein G (RBOHG) (Arabidopsis thaliana (Mouse-ear cress)).